We begin with the raw amino-acid sequence, 252 residues long: 5'-nucleotidase SurE (252 aa).

A divalent metal cation contacts are provided by aspartate 8, aspartate 9, serine 39, and asparagine 96.

It belongs to the SurE nucleotidase family. The cofactor is a divalent metal cation.

The protein resides in the cytoplasm. The enzyme catalyses a ribonucleoside 5'-phosphate + H2O = a ribonucleoside + phosphate. In terms of biological role, nucleotidase that shows phosphatase activity on nucleoside 5'-monophosphates. The chain is 5'-nucleotidase SurE from Petrotoga mobilis (strain DSM 10674 / SJ95).